The following is a 491-amino-acid chain: Lysine--tRNA ligase (491 aa).

2 residues coordinate Mg(2+): Glu399 and Glu406.

This sequence belongs to the class-II aminoacyl-tRNA synthetase family. Homodimer. The cofactor is Mg(2+).

It localises to the cytoplasm. The enzyme catalyses tRNA(Lys) + L-lysine + ATP = L-lysyl-tRNA(Lys) + AMP + diphosphate. The protein is Lysine--tRNA ligase of Chloroflexus aurantiacus (strain ATCC 29366 / DSM 635 / J-10-fl).